Here is a 150-residue protein sequence, read N- to C-terminus: Nucleoside diphosphate kinase (150 aa).

Residues Lys9, Phe57, Arg85, Thr91, Arg102, and Asn112 each contribute to the ATP site. The Pros-phosphohistidine intermediate role is filled by His115.

Belongs to the NDK family. Requires Mg(2+) as cofactor.

It is found in the cytoplasm. It catalyses the reaction a 2'-deoxyribonucleoside 5'-diphosphate + ATP = a 2'-deoxyribonucleoside 5'-triphosphate + ADP. It carries out the reaction a ribonucleoside 5'-diphosphate + ATP = a ribonucleoside 5'-triphosphate + ADP. Major role in the synthesis of nucleoside triphosphates other than ATP. The ATP gamma phosphate is transferred to the NDP beta phosphate via a ping-pong mechanism, using a phosphorylated active-site intermediate. The polypeptide is Nucleoside diphosphate kinase (Methanoregula boonei (strain DSM 21154 / JCM 14090 / 6A8)).